Consider the following 518-residue polypeptide: Cell wall biosynthesis protein LcpA (518 aa).

The Cytoplasmic segment spans residues Met-1–Ser-31. A helical membrane pass occupies residues Val-32 to Gly-52. Residues Lys-53 to Asn-518 are Periplasmic-facing. The segment at Ala-485 to Asn-518 is disordered.

The protein belongs to the LytR/CpsA/Psr (LCP) family. In terms of assembly, forms homodimers and homotetramers.

It is found in the cell inner membrane. Its function is as follows. Involved in cell wall biosynthesis. May be responsible for the transfer of arabinogalactan onto peptidoglycan. In vitro, has pyrophosphatase activity. The polypeptide is Cell wall biosynthesis protein LcpA (Corynebacterium glutamicum (strain ATCC 13032 / DSM 20300 / JCM 1318 / BCRC 11384 / CCUG 27702 / LMG 3730 / NBRC 12168 / NCIMB 10025 / NRRL B-2784 / 534)).